The primary structure comprises 395 residues: MRFTLRAHVSTVTDLKPVSHRQTPHLLSADSKGCLYLWNLISRRPIASIDLKTHIIAIEVVGQGLYAALARDNKLRFISLQEESRLTRINDKVSRELQSLEIVYEIPVNCLNFANFALQDLGLRNYRLWCCNTMDAESIDVYEFQLGDRQSFKRTFNAINLFDSVAGLAEAKQKFRFDKMGIVMRFIVAGDTVFCGYESGVVVGLRIRDKSLQICYASFAHYPEPVLSLAHDRTERRVFSSSTTDQVCVHNIPTPDLPVVTSVSGIQVVANAGTREEVINAPLKKIGHLAVLNDILLLTSWHGYVLGLQDQKELFRYRKERNLLCVDDSTDGQAETKKEKPWINPGPIAGIAHSTDSQLVLEKLPIGGHRRLKNFLEHKWYITGYNDGTITVSQI.

WD repeat units lie at residues 7–48 (AHVS…PIAS), 221–260 (HYPE…LPVV), and 343–386 (INPG…TGYN).

This sequence belongs to the WD repeat ASA1 family. As to quaternary structure, component of the ASTRA chromatin remodeling machinery complex.

Its subcellular location is the nucleus. Its function is as follows. Component of the ASTRA complex involved in chromatin remodeling. The polypeptide is ASTRA-associated protein 1 (ASA1) (Eremothecium gossypii (strain ATCC 10895 / CBS 109.51 / FGSC 9923 / NRRL Y-1056) (Yeast)).